The chain runs to 186 residues: MISSNDFRTGTTIELDGQVWRVVEFLHVKPGKGSAFVRTKLKSVQSGNVVEKTFRAGESVQQAILEKSNLQHTYVESGDYVFMDMTSFEETRLSSEQIGKGSKYLKEGMEVNVILHNGKVLEVELPISITLKVTETDPGVKGDTASGGTKPAILETGAQVMVPLFISVGEMIKVDTRNDSYLGREN.

This sequence belongs to the elongation factor P family.

Its subcellular location is the cytoplasm. Its pathway is protein biosynthesis; polypeptide chain elongation. In terms of biological role, involved in peptide bond synthesis. Stimulates efficient translation and peptide-bond synthesis on native or reconstituted 70S ribosomes in vitro. Probably functions indirectly by altering the affinity of the ribosome for aminoacyl-tRNA, thus increasing their reactivity as acceptors for peptidyl transferase. The sequence is that of Elongation factor P from Prochlorococcus marinus (strain MIT 9312).